We begin with the raw amino-acid sequence, 749 residues long: 5-methyltetrahydropteroyltriglutamate--homocysteine methyltransferase (749 aa).

Residues 18-21 (REWK) and lysine 112 each bind 5-methyltetrahydropteroyltri-L-glutamate. L-homocysteine contacts are provided by residues 420 to 422 (IGS) and glutamate 473. L-methionine-binding positions include 420-422 (IGS) and glutamate 473. Tryptophan 550 contributes to the 5-methyltetrahydropteroyltri-L-glutamate binding site. Aspartate 588 is a binding site for L-homocysteine. Aspartate 588 provides a ligand contact to L-methionine. Glutamate 594 lines the 5-methyltetrahydropteroyltri-L-glutamate pocket. Zn(2+) contacts are provided by histidine 630, cysteine 632, and glutamate 654. The Proton donor role is filled by histidine 683. Position 715 (cysteine 715) interacts with Zn(2+).

It belongs to the vitamin-B12 independent methionine synthase family. Requires Zn(2+) as cofactor.

The catalysed reaction is 5-methyltetrahydropteroyltri-L-glutamate + L-homocysteine = tetrahydropteroyltri-L-glutamate + L-methionine. It functions in the pathway amino-acid biosynthesis; L-methionine biosynthesis via de novo pathway; L-methionine from L-homocysteine (MetE route): step 1/1. In terms of biological role, catalyzes the transfer of a methyl group from 5-methyltetrahydrofolate to homocysteine resulting in methionine formation. This is 5-methyltetrahydropteroyltriglutamate--homocysteine methyltransferase from Staphylococcus haemolyticus (strain JCSC1435).